A 369-amino-acid polypeptide reads, in one-letter code: Protein-glutamate methylesterase/protein-glutamine glutaminase (369 aa).

The 118-residue stretch at 4-121 (KVLVVDDSSF…ARNRDEAVSL (118 aa)) folds into the Response regulatory domain. 4-aspartylphosphate is present on Asp-55. Positions 146–171 (ATSSARPLASRTAAPAASAPARPATT) are enriched in low complexity. Positions 146 to 175 (ATSSARPLASRTAAPAASAPARPATTKFRA) are disordered. Residues 176–369 (SGKKYQLTAI…ERMLVEVGLA (194 aa)) form the CheB-type methylesterase domain. Residues Ser-188, His-215, and Asp-311 contribute to the active site.

It belongs to the CheB family. Phosphorylated by CheA. Phosphorylation of the N-terminal regulatory domain activates the methylesterase activity.

The protein localises to the cytoplasm. The catalysed reaction is [protein]-L-glutamate 5-O-methyl ester + H2O = L-glutamyl-[protein] + methanol + H(+). The enzyme catalyses L-glutaminyl-[protein] + H2O = L-glutamyl-[protein] + NH4(+). In terms of biological role, involved in chemotaxis. Part of a chemotaxis signal transduction system that modulates chemotaxis in response to various stimuli. Catalyzes the demethylation of specific methylglutamate residues introduced into the chemoreceptors (methyl-accepting chemotaxis proteins or MCP) by CheR. Also mediates the irreversible deamidation of specific glutamine residues to glutamic acid. This chain is Protein-glutamate methylesterase/protein-glutamine glutaminase, found in Vibrio parahaemolyticus serotype O3:K6 (strain RIMD 2210633).